The chain runs to 402 residues: Dynactin subunit 2 (402 aa).

The segment at 1 to 26 (MADPKYADLPGIARNEPDVYETSDLP) is disordered. 2 coiled-coil regions span residues 101 to 132 (PQQR…SAAE) and 357 to 402 (VHLD…KRLQ).

This sequence belongs to the dynactin subunit 2 family. As to quaternary structure, subunit of dynactin, a multiprotein complex part of a tripartite complex with dynein and a adapter, such as BICDL1, BICD2 or HOOK3. The dynactin complex is built around ACTR1A/ACTB filament and consists of an actin-related filament composed of a shoulder domain, a pointed end and a barbed end. Its length is defined by its flexible shoulder domain. The soulder is composed of 2 DCTN1 subunits, 4 DCTN2 and 2 DCTN3.

The protein localises to the cytoplasm. It localises to the cytoskeleton. The protein resides in the microtubule organizing center. Its subcellular location is the centrosome. It is found in the membrane. Part of the dynactin complex that activates the molecular motor dynein for ultra-processive transport along microtubules. In the dynactin soulder domain, binds the ACTR1A filament and acts as a molecular ruler to determine the length. Modulates cytoplasmic dynein binding to an organelle, and plays a role in prometaphase chromosome alignment and spindle organization during mitosis. Involved in anchoring microtubules to centrosomes. This is Dynactin subunit 2 (DCTN2) from Gallus gallus (Chicken).